Reading from the N-terminus, the 1858-residue chain is Protein dop1 (1858 aa).

Positions M1–R23 are enriched in low complexity. Disordered regions lie at residues M1–L33 and P1052–P1092. Polar residues predominate over residues T1070–S1079. Residues N1838–S1854 are transactivation.

This sequence belongs to the DOP1 family.

Its subcellular location is the golgi apparatus membrane. Involved in cellular morphogenesis. Required for traffic between late Golgi and early endosomes, and for the normal structure and organization of the endoplasmic reticulum. During the vegetative phase, contributes to the highly polarized hyphal growth. Required for the reproductive cycle. Involved in conidiophore initiation and differentiation. May have a role in controlling the balance between vegetative proliferation and developmental morphogenesis. The polypeptide is Protein dop1 (dop1) (Emericella nidulans (strain FGSC A4 / ATCC 38163 / CBS 112.46 / NRRL 194 / M139) (Aspergillus nidulans)).